Reading from the N-terminus, the 157-residue chain is 6,7-dimethyl-8-ribityllumazine synthase (157 aa).

Residues F22, 57 to 59, and 81 to 83 each bind 5-amino-6-(D-ribitylamino)uracil; these read AYE and TVI. 86 to 87 is a (2S)-2-hydroxy-3-oxobutyl phosphate binding site; it reads GT. H89 functions as the Proton donor in the catalytic mechanism. F114 serves as a coordination point for 5-amino-6-(D-ribitylamino)uracil. R128 is a binding site for (2S)-2-hydroxy-3-oxobutyl phosphate.

The protein belongs to the DMRL synthase family. Forms an icosahedral capsid composed of 60 subunits, arranged as a dodecamer of pentamers.

It carries out the reaction (2S)-2-hydroxy-3-oxobutyl phosphate + 5-amino-6-(D-ribitylamino)uracil = 6,7-dimethyl-8-(1-D-ribityl)lumazine + phosphate + 2 H2O + H(+). It functions in the pathway cofactor biosynthesis; riboflavin biosynthesis; riboflavin from 2-hydroxy-3-oxobutyl phosphate and 5-amino-6-(D-ribitylamino)uracil: step 1/2. Catalyzes the formation of 6,7-dimethyl-8-ribityllumazine by condensation of 5-amino-6-(D-ribitylamino)uracil with 3,4-dihydroxy-2-butanone 4-phosphate. This is the penultimate step in the biosynthesis of riboflavin. The protein is 6,7-dimethyl-8-ribityllumazine synthase of Histophilus somni (strain 129Pt) (Haemophilus somnus).